The chain runs to 298 residues: Protein ABIL1 (298 aa).

The protein belongs to the ABI family. In terms of assembly, binds SCAR2. Expressed in seedlings, roots, hypocotyls, cotyledons, leaves, stems, and flowers.

The protein localises to the cytoplasm. Its subcellular location is the cytoskeleton. Functionally, involved in regulation of actin and microtubule organization. Part of a WAVE complex that activates the Arp2/3 complex. This is Protein ABIL1 (ABIL1) from Arabidopsis thaliana (Mouse-ear cress).